Here is a 279-residue protein sequence, read N- to C-terminus: Peptide deformylase 1B, chloroplastic (279 aa).

The Fe cation site is built by Cys-177 and His-219. Residue Glu-220 is part of the active site. Residue His-223 participates in Fe cation binding.

This sequence belongs to the polypeptide deformylase family. Requires Fe(2+) as cofactor.

The protein localises to the plastid. The protein resides in the chloroplast. It carries out the reaction N-terminal N-formyl-L-methionyl-[peptide] + H2O = N-terminal L-methionyl-[peptide] + formate. Removes the formyl group from the N-terminal Met of newly synthesized proteins. The chain is Peptide deformylase 1B, chloroplastic (PDF1B) from Solanum lycopersicum (Tomato).